The chain runs to 209 residues: Large ribosomal subunit protein uL3 (209 aa).

The disordered stretch occupies residues 128-163 (AHRGPMTHGSKFHRAVGSMGASSDPSRTFKNKRMPG).

This sequence belongs to the universal ribosomal protein uL3 family. In terms of assembly, part of the 50S ribosomal subunit. Forms a cluster with proteins L14 and L19.

Functionally, one of the primary rRNA binding proteins, it binds directly near the 3'-end of the 23S rRNA, where it nucleates assembly of the 50S subunit. The polypeptide is Large ribosomal subunit protein uL3 (Clostridium botulinum (strain 657 / Type Ba4)).